The following is a 176-amino-acid chain: Small ribosomal subunit protein uS5 (176 aa).

The region spanning 15 to 78 (FEERIVEIRR…SAARRNVFEV (64 aa)) is the S5 DRBM domain.

The protein belongs to the universal ribosomal protein uS5 family. Part of the 30S ribosomal subunit. Contacts proteins S4 and S8.

In terms of biological role, with S4 and S12 plays an important role in translational accuracy. Functionally, located at the back of the 30S subunit body where it stabilizes the conformation of the head with respect to the body. This Thermosipho africanus (strain TCF52B) protein is Small ribosomal subunit protein uS5.